We begin with the raw amino-acid sequence, 665 residues long: Cysteine-rich receptor-like protein kinase 41 (665 aa).

Residues Met-1–Gly-27 form the signal peptide. Residues Gln-28 to Lys-280 are Extracellular-facing. Gnk2-homologous domains lie at Pro-42–Ile-148 and Thr-154–Arg-260. Asn-120, Asn-165, and Asn-236 each carry an N-linked (GlcNAc...) asparagine glycan. Residues Ile-281–Phe-301 form a helical membrane-spanning segment. Topologically, residues Phe-302–Arg-665 are cytoplasmic. A Protein kinase domain is found at Phe-344–Thr-624. Residues Leu-350–Val-358 and Lys-372 contribute to the ATP site. Tyr-417 is modified (phosphotyrosine). The Proton acceptor role is filled by Asp-469. Residue Ser-473 is modified to Phosphoserine. The residue at position 511 (Thr-511) is a Phosphothreonine. Phosphotyrosine is present on Tyr-519.

Belongs to the protein kinase superfamily. Ser/Thr protein kinase family. CRK subfamily.

It is found in the membrane. It carries out the reaction L-seryl-[protein] + ATP = O-phospho-L-seryl-[protein] + ADP + H(+). The catalysed reaction is L-threonyl-[protein] + ATP = O-phospho-L-threonyl-[protein] + ADP + H(+). This Arabidopsis thaliana (Mouse-ear cress) protein is Cysteine-rich receptor-like protein kinase 41 (CRK41).